A 438-amino-acid chain; its full sequence is Protein DJ-1 homolog B (438 aa).

The transit peptide at methionine 1 to serine 45 directs the protein to the chloroplast. 2 consecutive PfpI endopeptidase domains span residues lysine 53–leucine 220 and proline 258–tyrosine 424.

It belongs to the peptidase C56 family. Homodimer.

The protein localises to the plastid. It localises to the chloroplast. Its function is as follows. May be involved in oxidative stress response. This is Protein DJ-1 homolog B (DJ1B) from Arabidopsis thaliana (Mouse-ear cress).